Here is a 370-residue protein sequence, read N- to C-terminus: Chaperone protein DnaJ (370 aa).

One can recognise a J domain in the interval 6–70 (DFYEILGVSK…QKRANYDQFG (65 aa)). The segment at 134–216 (GANKSVTLNV…CHGKGFNTKR (83 aa)) adopts a CR-type zinc-finger fold. The Zn(2+) site is built by cysteine 147, cysteine 150, cysteine 164, cysteine 167, cysteine 190, cysteine 193, cysteine 204, and cysteine 207. CXXCXGXG motif repeat units lie at residues 147-154 (CTSCHGSG), 164-171 (CSRCGGTG), 190-197 (CPDCGGSG), and 204-211 (CGECHGKG).

Belongs to the DnaJ family. As to quaternary structure, homodimer. The cofactor is Zn(2+).

It localises to the cytoplasm. In terms of biological role, participates actively in the response to hyperosmotic and heat shock by preventing the aggregation of stress-denatured proteins and by disaggregating proteins, also in an autonomous, DnaK-independent fashion. Unfolded proteins bind initially to DnaJ; upon interaction with the DnaJ-bound protein, DnaK hydrolyzes its bound ATP, resulting in the formation of a stable complex. GrpE releases ADP from DnaK; ATP binding to DnaK triggers the release of the substrate protein, thus completing the reaction cycle. Several rounds of ATP-dependent interactions between DnaJ, DnaK and GrpE are required for fully efficient folding. Also involved, together with DnaK and GrpE, in the DNA replication of plasmids through activation of initiation proteins. This chain is Chaperone protein DnaJ, found in Erysipelothrix rhusiopathiae.